Here is a 353-residue protein sequence, read N- to C-terminus: Nicotinate-nucleotide--dimethylbenzimidazole phosphoribosyltransferase (353 aa).

The Proton acceptor role is filled by E319.

Belongs to the CobT family.

It catalyses the reaction 5,6-dimethylbenzimidazole + nicotinate beta-D-ribonucleotide = alpha-ribazole 5'-phosphate + nicotinate + H(+). The protein operates within nucleoside biosynthesis; alpha-ribazole biosynthesis; alpha-ribazole from 5,6-dimethylbenzimidazole: step 1/2. In terms of biological role, catalyzes the synthesis of alpha-ribazole-5'-phosphate from nicotinate mononucleotide (NAMN) and 5,6-dimethylbenzimidazole (DMB). The chain is Nicotinate-nucleotide--dimethylbenzimidazole phosphoribosyltransferase from Syntrophobacter fumaroxidans (strain DSM 10017 / MPOB).